We begin with the raw amino-acid sequence, 238 residues long: CBS domain-containing protein CBSX2, chloroplastic (238 aa).

The transit peptide at 1–71 (MGSISLSNSM…ASVNNNNSVP (71 aa)) directs the protein to the chloroplast. 2 consecutive CBS domains span residues 83 to 145 (MTPR…QNDT) and 177 to 234 (MTPS…KRET).

It localises to the plastid. Its subcellular location is the chloroplast stroma. The polypeptide is CBS domain-containing protein CBSX2, chloroplastic (CBSX2) (Arabidopsis thaliana (Mouse-ear cress)).